Consider the following 165-residue polypeptide: Peptide deformylase (165 aa).

The Fe cation site is built by cysteine 88 and histidine 130. The active site involves glutamate 131. Histidine 134 lines the Fe cation pocket.

The protein belongs to the polypeptide deformylase family. It depends on Fe(2+) as a cofactor.

The catalysed reaction is N-terminal N-formyl-L-methionyl-[peptide] + H2O = N-terminal L-methionyl-[peptide] + formate. Functionally, removes the formyl group from the N-terminal Met of newly synthesized proteins. Requires at least a dipeptide for an efficient rate of reaction. N-terminal L-methionine is a prerequisite for activity but the enzyme has broad specificity at other positions. This Borreliella burgdorferi (strain ATCC 35210 / DSM 4680 / CIP 102532 / B31) (Borrelia burgdorferi) protein is Peptide deformylase.